The sequence spans 325 residues: Elongation factor P--(R)-beta-lysine ligase (325 aa).

Substrate is bound at residue 76–78 (SPE). ATP is bound by residues 100–102 (RNE) and N109. Residue Y118 participates in substrate binding. 244-245 (EL) is an ATP binding site. E251 contributes to the substrate binding site. G300 is an ATP binding site.

This sequence belongs to the class-II aminoacyl-tRNA synthetase family. EpmA subfamily. Homodimer.

It carries out the reaction D-beta-lysine + L-lysyl-[protein] + ATP = N(6)-((3R)-3,6-diaminohexanoyl)-L-lysyl-[protein] + AMP + diphosphate + H(+). In terms of biological role, with EpmB is involved in the beta-lysylation step of the post-translational modification of translation elongation factor P (EF-P). Catalyzes the ATP-dependent activation of (R)-beta-lysine produced by EpmB, forming a lysyl-adenylate, from which the beta-lysyl moiety is then transferred to the epsilon-amino group of a conserved specific lysine residue in EF-P. The chain is Elongation factor P--(R)-beta-lysine ligase from Yersinia pseudotuberculosis serotype O:1b (strain IP 31758).